A 378-amino-acid chain; its full sequence is 1-acyl-sn-glycerol-3-phosphate acyltransferase delta (378 aa).

The chain crosses the membrane as a helical span at residues 11 to 31 (FLCHLVFCYVFIASGLIVNAI). The HXXXXD motif motif lies at 96 to 101 (HKFEID). The next 3 membrane-spanning stretches (helical) occupy residues 125–145 (ELAYVPIIGWMWYFVEMIFCT), 311–331 (WLFWASLLLYPFFQFLVSMVS), and 338–358 (LASLVLIFCMASMGVRWMIGV).

It belongs to the 1-acyl-sn-glycerol-3-phosphate acyltransferase family. As to expression, expressed at a high levels in the brain, at intermediate or low levels in skeletal muscles, gut, kidney, spleen and lung. Barely detectable in heart and liver.

The protein localises to the endoplasmic reticulum membrane. It carries out the reaction a 1-acyl-sn-glycero-3-phosphate + an acyl-CoA = a 1,2-diacyl-sn-glycero-3-phosphate + CoA. It catalyses the reaction (4Z,7Z,10Z,13Z,16Z,19Z)-docosahexaenoyl-CoA + 1-hexadecanoyl-sn-glycero-3-phosphate = 1-hexadecanoyl-2-(4Z,7Z,10Z,13Z,16Z,19Z-docosahexaenoyl)-sn-glycero-3-phosphate + CoA. The enzyme catalyses 1-octadecanoyl-sn-glycero-3-phosphate + (9Z,12Z)-octadecadienoyl-CoA = 1-octadecanoyl-2-(9Z,12Z-octadecadienoyl)-sn-glycero-3-phosphate + CoA. The catalysed reaction is 1-octadecanoyl-sn-glycero-3-phosphate + (4Z,7Z,10Z,13Z,16Z,19Z)-docosahexaenoyl-CoA = 1-octadecanoyl-2-(4Z,7Z,10Z,13Z,16Z,19Z-docosahexaenoyl)-sn-glycero-3-phosphate + CoA. It carries out the reaction (4Z,7Z,10Z,13Z,16Z,19Z)-docosahexaenoyl-CoA + 1-(9Z-octadecenoyl)-sn-glycero-3-phosphate = 1-(9Z-octadecenoyl)-2-(4Z,7Z,10Z,13Z,16Z,19Z-docosahexaenoyl)-sn-glycero-3-phosphate + CoA. Its pathway is phospholipid metabolism; CDP-diacylglycerol biosynthesis; CDP-diacylglycerol from sn-glycerol 3-phosphate: step 2/3. Converts 1-acyl-sn-glycerol-3-phosphate (lysophosphatidic acid or LPA) into 1,2-diacyl-sn-glycerol-3-phosphate (phosphatidic acid or PA) by incorporating an acyl moiety at the sn-2 position of the glycerol backbone. Exhibits high acyl-CoA specificity for polyunsaturated fatty acyl-CoA, especially docosahexaenoyl-CoA (22:6-CoA, DHA-CoA). This chain is 1-acyl-sn-glycerol-3-phosphate acyltransferase delta (Agpat4), found in Mus musculus (Mouse).